Here is a 154-residue protein sequence, read N- to C-terminus: Transcriptional repressor NrdR (154 aa).

The segment at cysteine 3–cysteine 34 is a zinc-finger region. Residues proline 49–glutamate 139 form the ATP-cone domain.

Belongs to the NrdR family. It depends on Zn(2+) as a cofactor.

In terms of biological role, negatively regulates transcription of bacterial ribonucleotide reductase nrd genes and operons by binding to NrdR-boxes. The polypeptide is Transcriptional repressor NrdR (Pseudomonas putida (strain ATCC 700007 / DSM 6899 / JCM 31910 / BCRC 17059 / LMG 24140 / F1)).